Here is a 60-residue protein sequence, read N- to C-terminus: Large ribosomal subunit protein bL32 (60 aa).

Residues 1-43 (MAVQQNRKTRSRRGMRRSHDALTGKTLSVDSTTGEKHLRHHVT) are disordered. Over residues 7-16 (RKTRSRRGMR) the composition is skewed to basic residues.

This sequence belongs to the bacterial ribosomal protein bL32 family.

The protein is Large ribosomal subunit protein bL32 of Saccharophagus degradans (strain 2-40 / ATCC 43961 / DSM 17024).